We begin with the raw amino-acid sequence, 393 residues long: Dual specificity mitogen-activated protein kinase kinase 1 (393 aa).

A disordered region spans residues 1-27 (MPKKKPTPIQLNPAPDGSAVNGTSSAE). A Protein kinase domain is found at 68–361 (FEKISELGAG…LKQLMVHAFI (294 aa)). ATP contacts are provided by residues 74–82 (LGAGNGGVV), Lys97, 143–146 (MEHM), and 150–153 (SLDQ). Lys97 is a U0126 binding site. 144–146 (EHM) contacts K-252a. Catalysis depends on Asp190, which acts as the Proton acceptor. Residues 192 to 195 (KPSN) and Asp208 each bind ATP. Ser194 is a binding site for K-252a. U0126 is bound at residue 208–211 (DFGV). 2 positions are modified to phosphoserine; by BRAF and RAF1: Ser218 and Ser222. Residues 270-307 (ELELMFGCQVEGDAAETPPRPRTPGRPLSSYGMDSRPP) are RAF1-binding. Thr286 bears the Phosphothreonine mark. Thr292 bears the Phosphothreonine; by MAPK1 mark. The residue at position 298 (Ser298) is a Phosphoserine; by PAK.

This sequence belongs to the protein kinase superfamily. STE Ser/Thr protein kinase family. MAP kinase kinase subfamily. In terms of assembly, found in a complex with at least BRAF, HRAS, MAP2K1, MAPK3/ERK1 and RGS14. Forms a heterodimer with MAP2K2/MEK2. Forms heterodimers with KSR2 which further dimerize to form tetramers. Interacts with KSR1 or KSR2 and BRAF; the interaction with KSR1 or KSR2 mediates KSR1-BRAF or KSR2-BRAF dimerization. Interacts with ARBB2, LAMTOR3 and RAF1. Interacts with MAPK1/ERK2. Interacts with MORG1. Interacts with PPARG. Interacts with isoform 1 of VRK2. Interacts with SGK1. Interacts with BIRC6/bruce. Interacts with KAT7; the interaction promotes KAT7 phosphorylation. Interacts with RAF1 and NEK10; the interaction is required for ERK1/2-signaling pathway activation in response to UV irradiation. Interacts with TRAF3IP3. Interacts with MOS. (Microbial infection) Interacts with Yersinia YopJ. In terms of processing, phosphorylation at Ser-218 and Ser-222 by MAP kinase kinase kinases (BRAF or MEKK1) positively regulates kinase activity. Also phosphorylated at Thr-292 by MAPK1/ERK2 and at Ser-298 by PAK. MAPK1/ERK2 phosphorylation of Thr-292 occurs in response to cellular adhesion and leads to inhibition of Ser-298 phosphorylation by PAK. Autophosphorylated at Ser-218 and Ser-222, autophosphosphorylation is promoted by NEK10 following UV irradiation. (Microbial infection) Acetylation by Yersinia YopJ prevents phosphorylation and activation, thus blocking the MAPK signaling pathway. Widely expressed, with extremely low levels in brain.

The protein resides in the cytoplasm. It localises to the cytoskeleton. It is found in the microtubule organizing center. The protein localises to the centrosome. Its subcellular location is the spindle pole body. The protein resides in the nucleus. It localises to the membrane. It catalyses the reaction L-seryl-[protein] + ATP = O-phospho-L-seryl-[protein] + ADP + H(+). The enzyme catalyses L-threonyl-[protein] + ATP = O-phospho-L-threonyl-[protein] + ADP + H(+). The catalysed reaction is L-tyrosyl-[protein] + ATP = O-phospho-L-tyrosyl-[protein] + ADP + H(+). Ras proteins such as HRAS mediate the activation of RAF proteins such as RAF1 or BRAF which in turn activate extracellular signal-regulated kinases (ERK) through MAPK (mitogen-activated protein kinases) and ERK kinases MAP2K1/MEK1 and MAP2K2/MEK2. Activation occurs through phosphorylation of Ser-218 and Ser-222. MAP2K1/MEK1 binds KSR1 or KSR2 releasing the inhibitory intramolecular interaction between KSR1 or KSR2 protein kinase and N-terminal domains. This allows KSR1 or KSR2 dimerization with BRAF leading to BRAF activation and phosphorylation of MAP2K1. MAP2K1/MEK1 is also the target of negative feed-back regulation by its substrate kinases, such as MAPK1/ERK2. These phosphorylate MAP2K1/MEK1 on Thr-292, thereby facilitating dephosphorylation of the activating residues Ser-218 and Ser-222. Inhibited by serine/threonine phosphatase 2A. Many inhibitors have been identified including pyrrole derivatives, TAK-733 (one of a series of 8-methylpyrido[2,3-d]pyrimidine-4,7(3H,8H)-dione derivatives), CH4987655 and RDEA119/BAY 869766. Functionally, dual specificity protein kinase which acts as an essential component of the MAP kinase signal transduction pathway. Binding of extracellular ligands such as growth factors, cytokines and hormones to their cell-surface receptors activates RAS and this initiates RAF1 activation. RAF1 then further activates the dual-specificity protein kinases MAP2K1/MEK1 and MAP2K2/MEK2. Both MAP2K1/MEK1 and MAP2K2/MEK2 function specifically in the MAPK/ERK cascade, and catalyze the concomitant phosphorylation of a threonine and a tyrosine residue in a Thr-Glu-Tyr sequence located in the extracellular signal-regulated kinases MAPK3/ERK1 and MAPK1/ERK2, leading to their activation and further transduction of the signal within the MAPK/ERK cascade. Activates BRAF in a KSR1 or KSR2-dependent manner; by binding to KSR1 or KSR2 releases the inhibitory intramolecular interaction between KSR1 or KSR2 protein kinase and N-terminal domains which promotes KSR1 or KSR2-BRAF dimerization and BRAF activation. Depending on the cellular context, this pathway mediates diverse biological functions such as cell growth, adhesion, survival and differentiation, predominantly through the regulation of transcription, metabolism and cytoskeletal rearrangements. One target of the MAPK/ERK cascade is peroxisome proliferator-activated receptor gamma (PPARG), a nuclear receptor that promotes differentiation and apoptosis. MAP2K1/MEK1 has been shown to export PPARG from the nucleus. The MAPK/ERK cascade is also involved in the regulation of endosomal dynamics, including lysosome processing and endosome cycling through the perinuclear recycling compartment (PNRC), as well as in the fragmentation of the Golgi apparatus during mitosis. This Homo sapiens (Human) protein is Dual specificity mitogen-activated protein kinase kinase 1.